Here is a 224-residue protein sequence, read N- to C-terminus: Glutamate/aspartate import permease protein GltK (224 aa).

Residues 1–19 (MYEFDWSSIVPSLPYLLDG) lie on the Periplasmic side of the membrane. A helical transmembrane segment spans residues 20–40 (LVITLKITVTAVVIGILWGTM). Residues 20 to 216 (LVITLKITVT…VISLSASLLV (197 aa)) form the ABC transmembrane type-1 domain. At 41-67 (LAVMRLSSFAPVAWFAKAYVNVFRSIP) the chain is on the cytoplasmic side. The chain crosses the membrane as a helical span at residues 68-88 (LVMVLLWFYLIVPGFLQNVLG). The Periplasmic segment spans residues 89–94 (LSPKND). Residues 95-112 (IRLISAMVAFSMFEAAYY) form a helical membrane-spanning segment. Residues 113–154 (SEIIRAGIQSISRGQSSAALALGMTHWQSMKLIILPQAFRAM) lie on the Cytoplasmic side of the membrane. Residues 155–175 (VPLLLTQGIVLFQDTSLVYVL) traverse the membrane as a helical segment. Residues 176-196 (SLADFFRTASTIGERDGTQVE) lie on the Periplasmic side of the membrane. Residues 197–217 (MILFAGFVYFVISLSASLLVS) traverse the membrane as a helical segment. The Cytoplasmic segment spans residues 218-224 (YLKRRTA).

The protein belongs to the binding-protein-dependent transport system permease family. HisMQ subfamily. The complex is composed of two ATP-binding proteins (GltL), two transmembrane proteins (GltJ and GltK) and a solute-binding protein (GltI).

The protein localises to the cell inner membrane. Functionally, part of the ABC transporter complex GltIJKL involved in glutamate and aspartate uptake. Probably responsible for the translocation of the substrate across the membrane. The chain is Glutamate/aspartate import permease protein GltK (gltK) from Escherichia coli O157:H7.